We begin with the raw amino-acid sequence, 128 residues long: Large ribosomal subunit protein uL24 (128 aa).

Residues 105–128 (KAKSRQVGKEKGKYKEETIEKMQE) are disordered.

This sequence belongs to the universal ribosomal protein uL24 family. As to quaternary structure, component of the large ribosomal subunit.

The protein resides in the cytoplasm. Functionally, component of the large ribosomal subunit. The ribosome is a large ribonucleoprotein complex responsible for the synthesis of proteins in the cell. In Gallus gallus (Chicken), this protein is Large ribosomal subunit protein uL24 (RPL26).